A 548-amino-acid polypeptide reads, in one-letter code: Chaperonin GroEL (548 aa).

ATP contacts are provided by residues 30–33 (TLGP), Lys51, 87–91 (DGTTT), Gly415, 479–481 (NAA), and Asp495.

Belongs to the chaperonin (HSP60) family. As to quaternary structure, forms a cylinder of 14 subunits composed of two heptameric rings stacked back-to-back. Interacts with the co-chaperonin GroES.

Its subcellular location is the cytoplasm. The catalysed reaction is ATP + H2O + a folded polypeptide = ADP + phosphate + an unfolded polypeptide.. Its function is as follows. Together with its co-chaperonin GroES, plays an essential role in assisting protein folding. The GroEL-GroES system forms a nano-cage that allows encapsulation of the non-native substrate proteins and provides a physical environment optimized to promote and accelerate protein folding. This Pectobacterium carotovorum subsp. carotovorum (strain PC1) protein is Chaperonin GroEL.